A 173-amino-acid chain; its full sequence is Co-chaperone protein HscB homolog (173 aa).

Positions 5–77 (CHFALFDLQP…PRRARYLLAI (73 aa)) constitute a J domain.

Belongs to the HscB family. In terms of assembly, interacts with HscA and stimulates its ATPase activity.

Co-chaperone involved in the maturation of iron-sulfur cluster-containing proteins. Seems to help targeting proteins to be folded toward HscA. This chain is Co-chaperone protein HscB homolog, found in Pseudomonas putida (strain W619).